Consider the following 239-residue polypeptide: RNA polymerase sigma-35 factor (239 aa).

The propeptide occupies 1–27 (MMKLKFYLVYLWYKVLLKLGIKTDEIY). Positions 86-99 (DLISIGTIGLIKAV) match the Polymerase core binding motif. Residues 206–225 (QKDVADMLGISQSYISRLEK) constitute a DNA-binding region (H-T-H motif).

It belongs to the sigma-70 factor family. Post-translationally, proteolytically cleaved in the N-terminus probably by a SpoIIGA homolog to yield the active peptide.

Functionally, sigma factors are initiation factors that promote the attachment of RNA polymerase to specific initiation sites and are then released. This sigma factor directs the transcription of crystal protein genes, a sporulation-regulated event. The chain is RNA polymerase sigma-35 factor (sigE) from Bacillus anthracis.